The primary structure comprises 366 residues: Sodium-potassium/proton antiporter ChaA (366 aa).

The Cytoplasmic portion of the chain corresponds to 1–16 (MSNAQEAVKTRHKETS). Helical transmembrane passes span 17 to 37 (LIFP…QTLP) and 38 to 58 (VVIA…FSVV). Residues 59-74 (RHADVLAHRLGEPYGS) are Cytoplasmic-facing. The chain crosses the membrane as a helical span at residues 75–95 (LILSLSVVILEVSLISALMAT). Topologically, residues 96–106 (GDAAPTLMRDT) are periplasmic. A helical transmembrane segment spans residues 107–127 (LYSIIMIVTGGLVGFSLLLGG). At 128 to 143 (RKFATQYMNLFGIKQY) the chain is on the cytoplasmic side. Residues 144-164 (LIALFPLAIIVLVFPMALPAA) traverse the membrane as a helical segment. Residues 165-167 (NFS) lie on the Periplasmic side of the membrane. A helical membrane pass occupies residues 168 to 188 (TGQALLVALISAAMYGVFLLI). Residues 189–216 (QTKTHQSLFVYEHEDDSDDDDPHHGKPS) lie on the Cytoplasmic side of the membrane. Residues 217–237 (AHSSLWHAIWLIIHLIAVIAV) traverse the membrane as a helical segment. Residues 238 to 255 (TKMNASSLETLLDSMNAP) are Periplasmic-facing. A helical transmembrane segment spans residues 256 to 276 (VAFTGFLVALLILSPEGLGAL). At 277–290 (KAVLNNQVQRAMNL) the chain is on the cytoplasmic side. Residues 291 to 311 (FFGSVLATISLTVPVVTLIAF) form a helical membrane-spanning segment. Topologically, residues 312 to 318 (MTGNELQ) are periplasmic. The chain crosses the membrane as a helical span at residues 319 to 339 (FALGAPEMVVMVASLVLCHIS). Residues 340–345 (FSTGRT) lie on the Cytoplasmic side of the membrane. A helical transmembrane segment spans residues 346–366 (NVLNGAAHLALFAAYLMTIFA).

This sequence belongs to the Ca(2+):cation antiporter (CaCA) (TC 2.A.19) family.

The protein resides in the cell inner membrane. It carries out the reaction Na(+)(in) + H(+)(out) = Na(+)(out) + H(+)(in). The catalysed reaction is K(+)(in) + H(+)(out) = K(+)(out) + H(+)(in). The enzyme catalyses Ca(2+)(in) + H(+)(out) = Ca(2+)(out) + H(+)(in). Its activity is regulated as follows. Pronounced pH dependence with sodium as substrate. Ca(2+)/H(+) and Na(+)/H(+) antiporter activities are both inhibited by magnesium. Ca(2+)/H(+) activity is inhibited by the proton ionophore carbonyl cyanide m-chlorophenylhydrazone (CCCP). Its function is as follows. Sodium exporter that functions mainly at alkaline pH. Can also function as a potassium/proton and calcium/proton antiporter at alkaline pH. Does not play a major role in calcium export. The K(+)/H(+) antiporter activity may enable E.coli to adapt to K(+) salinity stress and to maintain K(+) homeostasis. In Escherichia coli (strain K12), this protein is Sodium-potassium/proton antiporter ChaA.